Here is a 464-residue protein sequence, read N- to C-terminus: UDP-N-acetylmuramate--L-alanine ligase (464 aa).

An ATP-binding site is contributed by 117–123; the sequence is GTHGKTT.

The protein belongs to the MurCDEF family.

Its subcellular location is the cytoplasm. The enzyme catalyses UDP-N-acetyl-alpha-D-muramate + L-alanine + ATP = UDP-N-acetyl-alpha-D-muramoyl-L-alanine + ADP + phosphate + H(+). Its pathway is cell wall biogenesis; peptidoglycan biosynthesis. Cell wall formation. In Streptomyces avermitilis (strain ATCC 31267 / DSM 46492 / JCM 5070 / NBRC 14893 / NCIMB 12804 / NRRL 8165 / MA-4680), this protein is UDP-N-acetylmuramate--L-alanine ligase.